The sequence spans 851 residues: DNA mismatch repair protein MutS (851 aa).

602 to 609 (GPNMSGKS) serves as a coordination point for ATP.

Belongs to the DNA mismatch repair MutS family.

Its function is as follows. This protein is involved in the repair of mismatches in DNA. It is possible that it carries out the mismatch recognition step. This protein has a weak ATPase activity. In Streptococcus pyogenes serotype M6 (strain ATCC BAA-946 / MGAS10394), this protein is DNA mismatch repair protein MutS.